A 2288-amino-acid chain; its full sequence is Protein Ycf2 (2288 aa).

1629 to 1636 (GSIGTGRS) contributes to the ATP binding site.

Belongs to the Ycf2 family.

The protein localises to the plastid. It is found in the chloroplast stroma. Its function is as follows. Probable ATPase of unknown function. Its presence in a non-photosynthetic plant (Epifagus virginiana) and experiments in tobacco indicate that it has an essential function which is probably not related to photosynthesis. This Phaseolus vulgaris (Kidney bean) protein is Protein Ycf2.